Reading from the N-terminus, the 456-residue chain is Dothistromin biosynthesis regulatory protein aflJ (456 aa).

Residues 74–143 enclose the HTH iclR-type domain; it reads LARENQLLAC…PKPGYVAHSG (70 aa). A DNA-binding region (H-T-H motif) is located at residues 104 to 123; the sequence is YSDVADLACVPVDQLRRIAR. The span at 290-300 shows a compositional bias: polar residues; it reads KLHNGLSTPPE. A disordered region spans residues 290 to 314; the sequence is KLHNGLSTPPESDTGPAARAAKASE.

The protein localises to the nucleus. Functionally, transcription coactivator involved in regulation of the dothistromin biosynthesis gene cluster with aflR. The polypeptide is Dothistromin biosynthesis regulatory protein aflJ (Dothistroma septosporum (strain NZE10 / CBS 128990) (Red band needle blight fungus)).